Consider the following 319-residue polypeptide: tRNA pseudouridine synthase B (319 aa).

Aspartate 49 acts as the Nucleophile in catalysis.

Belongs to the pseudouridine synthase TruB family. Type 1 subfamily.

It catalyses the reaction uridine(55) in tRNA = pseudouridine(55) in tRNA. Its function is as follows. Responsible for synthesis of pseudouridine from uracil-55 in the psi GC loop of transfer RNAs. The chain is tRNA pseudouridine synthase B from Aeromonas salmonicida (strain A449).